Here is a 249-residue protein sequence, read N- to C-terminus: Leucyl/phenylalanyl-tRNA--protein transferase (249 aa).

It belongs to the L/F-transferase family.

The protein localises to the cytoplasm. It catalyses the reaction N-terminal L-lysyl-[protein] + L-leucyl-tRNA(Leu) = N-terminal L-leucyl-L-lysyl-[protein] + tRNA(Leu) + H(+). The enzyme catalyses N-terminal L-arginyl-[protein] + L-leucyl-tRNA(Leu) = N-terminal L-leucyl-L-arginyl-[protein] + tRNA(Leu) + H(+). It carries out the reaction L-phenylalanyl-tRNA(Phe) + an N-terminal L-alpha-aminoacyl-[protein] = an N-terminal L-phenylalanyl-L-alpha-aminoacyl-[protein] + tRNA(Phe). Functions in the N-end rule pathway of protein degradation where it conjugates Leu, Phe and, less efficiently, Met from aminoacyl-tRNAs to the N-termini of proteins containing an N-terminal arginine or lysine. The polypeptide is Leucyl/phenylalanyl-tRNA--protein transferase (Cupriavidus metallidurans (strain ATCC 43123 / DSM 2839 / NBRC 102507 / CH34) (Ralstonia metallidurans)).